The sequence spans 753 residues: Striatin-4 (753 aa).

The segment at 10-65 is disordered; the sequence is VAAAASSCRPLGSGAGPGPTGAAPVSAPAPGPGPAGKGGGGGGSPGPTAGPEPLSL. Residues 43-54 are compositionally biased toward gly residues; it reads PAGKGGGGGGSP. A Phosphoserine modification is found at S53. Residues 69–136 are a coiled coil; sequence LHFIQHEWAR…QERAKYHKLK (68 aa). The caveolin-binding stretch occupies residues 71 to 79; sequence FIQHEWARF. The segment at 165-182 is calmodulin-binding; that stretch reads ENSPLVWKEGRQLLRQYL. S206 is subject to Phosphoserine. 3 disordered regions span residues 213–232, 271–345, and 363–382; these read VEPSEGAPRAPPGPAGLSGG, CEDE…SPHE, and VDGLPPKVTGPPPGTPQPRP. 2 stretches are compositionally biased toward acidic residues: residues 271–283 and 302–317; these read CEDEDSDEDDELD and EMEDEDEEDDSEDAIN. S276 is subject to Phosphoserine. The segment covering 332–345 has biased composition (basic and acidic residues); that stretch reads PDPRRCTVDGSPHE. A compositionally biased stretch (pro residues) spans 370-380; it reads VTGPPPGTPQP. WD repeat units follow at residues 436–475, 489–528, 542–581, 587–628, 635–674, 677–716, and 723–753; these read SHYDGIRSLAFHHSQSALLTASEDGTLKLWNLQKAVTAKK, AHRGPVLAVAMGSNSEYCYSGGADACIHSWKIPDLSMDPY, GHGDAVWGLAFSPTSQRLASCSADGTVRIWDPSSSSPACL, ASEH…ALLT, SGPTQINQVVSHPNQPLTITAHDDRGIRFLDNRTGKPVHS, AHLDAVTCLAVDPNGAFLMSGSHDCSLRLWSLDNKTCVQE, and KHEEAIHAVACHPSKALIASAGADALAKVFV.

It belongs to the WD repeat striatin family. Part of the core of STRIPAK complexes composed of PP2A catalytic and scaffolding subunits, the striatins (PP2A regulatory subunits), the striatin-associated proteins MOB4, STRIP1 and STRIP2, PDCD10 and members of the STE20 kinases, such as STK24 and STK26. Interacts with CTTNBP2NL.

The protein resides in the cytoplasm. Calmodulin-binding scaffolding protein which is the center of the striatin-interacting phosphatase and kinase (STRIPAK) complexes. STRIPAK complexes have critical roles in protein (de)phosphorylation and are regulators of multiple signaling pathways including Hippo, MAPK, nuclear receptor and cytoskeleton remodeling. Different types of STRIPAK complexes are involved in a variety of biological processes such as cell growth, differentiation, apoptosis, metabolism and immune regulation. Key regulator of the expanded Hippo signaling pathway by interacting and allowing the inhibition of MAP4K kinases by the STRIPAK complex. The polypeptide is Striatin-4 (Homo sapiens (Human)).